Consider the following 252-residue polypeptide: Thiazole synthase (252 aa).

Lysine 91 functions as the Schiff-base intermediate with DXP in the catalytic mechanism. 1-deoxy-D-xylulose 5-phosphate is bound by residues glycine 152, 179 to 180, and 201 to 202; these read AG and NT.

It belongs to the ThiG family. As to quaternary structure, homotetramer. Forms heterodimers with either ThiH or ThiS.

The protein resides in the cytoplasm. The catalysed reaction is [ThiS sulfur-carrier protein]-C-terminal-Gly-aminoethanethioate + 2-iminoacetate + 1-deoxy-D-xylulose 5-phosphate = [ThiS sulfur-carrier protein]-C-terminal Gly-Gly + 2-[(2R,5Z)-2-carboxy-4-methylthiazol-5(2H)-ylidene]ethyl phosphate + 2 H2O + H(+). It functions in the pathway cofactor biosynthesis; thiamine diphosphate biosynthesis. Functionally, catalyzes the rearrangement of 1-deoxy-D-xylulose 5-phosphate (DXP) to produce the thiazole phosphate moiety of thiamine. Sulfur is provided by the thiocarboxylate moiety of the carrier protein ThiS. In vitro, sulfur can be provided by H(2)S. The polypeptide is Thiazole synthase (Erwinia amylovora (Fire blight bacteria)).